Here is a 27-residue protein sequence, read N- to C-terminus: MAPCSCKSCGTSCAGSCTSCSCGSCSH.

Positions 1 to 18 (MAPCSCKSCGTSCAGSCT) are enriched in low complexity. Residues 1 to 27 (MAPCSCKSCGTSCAGSCTSCSCGSCSH) form a disordered region. Cu(+) is bound by residues Cys4, Cys6, Cys9, Cys13, Cys20, Cys22, and Cys25.

The protein belongs to the metallothionein superfamily. Type 8 family.

The chain is Metallothionein-like protein CAP5 (CAP5) from Colletotrichum gloeosporioides (Anthracnose fungus).